The primary structure comprises 271 residues: Formamidopyrimidine-DNA glycosylase (271 aa).

The Schiff-base intermediate with DNA role is filled by Pro-2. Glu-3 acts as the Proton donor in catalysis. Catalysis depends on Lys-58, which acts as the Proton donor; for beta-elimination activity. Positions 92, 111, and 152 each coordinate DNA. The FPG-type zinc-finger motif lies at 237–271 (FVYGRQQQPCKQCGSLLRQTTIRQRTTVWCGHCQG). Catalysis depends on Arg-261, which acts as the Proton donor; for delta-elimination activity.

This sequence belongs to the FPG family. As to quaternary structure, monomer. Zn(2+) is required as a cofactor.

It catalyses the reaction Hydrolysis of DNA containing ring-opened 7-methylguanine residues, releasing 2,6-diamino-4-hydroxy-5-(N-methyl)formamidopyrimidine.. The catalysed reaction is 2'-deoxyribonucleotide-(2'-deoxyribose 5'-phosphate)-2'-deoxyribonucleotide-DNA = a 3'-end 2'-deoxyribonucleotide-(2,3-dehydro-2,3-deoxyribose 5'-phosphate)-DNA + a 5'-end 5'-phospho-2'-deoxyribonucleoside-DNA + H(+). Involved in base excision repair of DNA damaged by oxidation or by mutagenic agents. Acts as a DNA glycosylase that recognizes and removes damaged bases. Has a preference for oxidized purines, such as 7,8-dihydro-8-oxoguanine (8-oxoG). Has AP (apurinic/apyrimidinic) lyase activity and introduces nicks in the DNA strand. Cleaves the DNA backbone by beta-delta elimination to generate a single-strand break at the site of the removed base with both 3'- and 5'-phosphates. This Xylella fastidiosa (strain 9a5c) protein is Formamidopyrimidine-DNA glycosylase (mutM1).